Reading from the N-terminus, the 424-residue chain is Enolase (424 aa).

Q163 lines the (2R)-2-phosphoglycerate pocket. The Proton donor role is filled by E205. The Mg(2+) site is built by D242, E285, and D312. The (2R)-2-phosphoglycerate site is built by K337, R366, S367, and K388. K337 acts as the Proton acceptor in catalysis.

It belongs to the enolase family. It depends on Mg(2+) as a cofactor.

It localises to the cytoplasm. The protein localises to the secreted. The protein resides in the cell surface. The catalysed reaction is (2R)-2-phosphoglycerate = phosphoenolpyruvate + H2O. The protein operates within carbohydrate degradation; glycolysis; pyruvate from D-glyceraldehyde 3-phosphate: step 4/5. Its function is as follows. Catalyzes the reversible conversion of 2-phosphoglycerate (2-PG) into phosphoenolpyruvate (PEP). It is essential for the degradation of carbohydrates via glycolysis. This Dinoroseobacter shibae (strain DSM 16493 / NCIMB 14021 / DFL 12) protein is Enolase.